We begin with the raw amino-acid sequence, 129 residues long: Small ribosomal subunit protein uS11 (129 aa).

The protein belongs to the universal ribosomal protein uS11 family. Part of the 30S ribosomal subunit. Interacts with proteins S7 and S18. Binds to IF-3.

Its function is as follows. Located on the platform of the 30S subunit, it bridges several disparate RNA helices of the 16S rRNA. Forms part of the Shine-Dalgarno cleft in the 70S ribosome. This chain is Small ribosomal subunit protein uS11, found in Escherichia fergusonii (strain ATCC 35469 / DSM 13698 / CCUG 18766 / IAM 14443 / JCM 21226 / LMG 7866 / NBRC 102419 / NCTC 12128 / CDC 0568-73).